Consider the following 202-residue polypeptide: NADH-quinone oxidoreductase subunit C (202 aa).

This sequence belongs to the complex I 30 kDa subunit family. In terms of assembly, NDH-1 is composed of 14 different subunits. Subunits NuoB, C, D, E, F, and G constitute the peripheral sector of the complex.

It localises to the cell inner membrane. The catalysed reaction is a quinone + NADH + 5 H(+)(in) = a quinol + NAD(+) + 4 H(+)(out). Functionally, NDH-1 shuttles electrons from NADH, via FMN and iron-sulfur (Fe-S) centers, to quinones in the respiratory chain. The immediate electron acceptor for the enzyme in this species is believed to be ubiquinone. Couples the redox reaction to proton translocation (for every two electrons transferred, four hydrogen ions are translocated across the cytoplasmic membrane), and thus conserves the redox energy in a proton gradient. The polypeptide is NADH-quinone oxidoreductase subunit C (Bartonella henselae (strain ATCC 49882 / DSM 28221 / CCUG 30454 / Houston 1) (Rochalimaea henselae)).